Here is a 318-residue protein sequence, read N- to C-terminus: Fe(3+) dicitrate transport system permease protein FecD (318 aa).

Residues 1 to 2 (MK) lie on the Cytoplasmic side of the membrane. Residues 3–23 (IALVIFITLALAGCALLSLHM) form a helical membrane-spanning segment. Residues 24–55 (GVIPVPWRALLTDWQAGHEHYYVLMEYRLPRL) lie on the Periplasmic side of the membrane. A helical membrane pass occupies residues 56–76 (LLALFVGAALAVAGVLIQGIV). Residues 77-105 (RNPLASPDILGVNHAASLASVGALLLMPS) lie on the Cytoplasmic side of the membrane. Residues 106-126 (LPVMVLPLLAFAGGMAGLILL) traverse the membrane as a helical segment. The Periplasmic segment spans residues 127–137 (KMLAKTHQPMK). A helical transmembrane segment spans residues 138 to 158 (LALTGVALSACWASLTDYLML). The Cytoplasmic portion of the chain corresponds to 159–179 (SRPQDVNNALLWLTGSLWGRD). The helical transmembrane segment at 180 to 200 (WSFVKIAIPLMILFLPLSLSF) threads the bilayer. Residues 201–225 (CRDLDLLALGDARATTLGVSVPHTR) are Periplasmic-facing. The chain crosses the membrane as a helical span at residues 226–246 (FWALLLAVAMTSTGVAACGPI). The Cytoplasmic portion of the chain corresponds to 247–269 (SFIGLVVPHMMRSITGGRHRRLL). A helical membrane pass occupies residues 270–290 (PVSALTGALLLVVADLLARII). The Periplasmic portion of the chain corresponds to 291 to 294 (HPPL). The chain crosses the membrane as a helical span at residues 295-315 (ELPVGVLTAIIGAPWFVWLLV). At 316 to 318 (RMR) the chain is on the cytoplasmic side.

This sequence belongs to the binding-protein-dependent transport system permease family. FecCD subfamily. In terms of assembly, the complex is composed of two ATP-binding proteins (FecE), two transmembrane proteins (FecC and FecD) and a solute-binding protein (FecB). Interacts with FecB.

It is found in the cell inner membrane. Its function is as follows. Part of the ABC transporter complex FecBCDE involved in citrate-dependent Fe(3+) uptake. Probably responsible for the translocation of the substrate across the membrane. This is Fe(3+) dicitrate transport system permease protein FecD from Escherichia coli (strain K12).